A 360-amino-acid chain; its full sequence is Glutaminyl-peptide cyclotransferase (360 aa).

A signal peptide spans 1 to 23; the sequence is MKYLKILIIVTIFFFLLINVINC. Asn135 carries an N-linked (GlcNAc...) asparagine glycan. Asp165 contributes to the Zn(2+) binding site. The active-site Proton acceptor is the Glu199. Position 200 (Glu200) interacts with Zn(2+). Asp251 functions as the Proton acceptor in the catalytic mechanism. Position 330 (His330) interacts with Zn(2+).

Belongs to the glutaminyl-peptide cyclotransferase family.

Its subcellular location is the secreted. The catalysed reaction is N-terminal L-glutaminyl-[peptide] = N-terminal 5-oxo-L-prolyl-[peptide] + NH4(+). Responsible for the biosynthesis of pyroglutamyl peptides. Has a bias against acidic and tryptophan residues adjacent to the N-terminal glutaminyl residue and a lack of importance of chain length after the second residue. Also catalyzes N-terminal pyroglutamate formation. This Dictyostelium discoideum (Social amoeba) protein is Glutaminyl-peptide cyclotransferase (qpct).